A 349-amino-acid chain; its full sequence is S-adenosylmethionine:tRNA ribosyltransferase-isomerase (349 aa).

It belongs to the QueA family. Monomer.

Its subcellular location is the cytoplasm. It catalyses the reaction 7-aminomethyl-7-carbaguanosine(34) in tRNA + S-adenosyl-L-methionine = epoxyqueuosine(34) in tRNA + adenine + L-methionine + 2 H(+). The protein operates within tRNA modification; tRNA-queuosine biosynthesis. Its function is as follows. Transfers and isomerizes the ribose moiety from AdoMet to the 7-aminomethyl group of 7-deazaguanine (preQ1-tRNA) to give epoxyqueuosine (oQ-tRNA). The sequence is that of S-adenosylmethionine:tRNA ribosyltransferase-isomerase from Pseudomonas putida (strain GB-1).